Consider the following 158-residue polypeptide: Transcription elongation factor GreA (158 aa).

This sequence belongs to the GreA/GreB family.

Its function is as follows. Necessary for efficient RNA polymerase transcription elongation past template-encoded arresting sites. The arresting sites in DNA have the property of trapping a certain fraction of elongating RNA polymerases that pass through, resulting in locked ternary complexes. Cleavage of the nascent transcript by cleavage factors such as GreA or GreB allows the resumption of elongation from the new 3'terminus. GreA releases sequences of 2 to 3 nucleotides. This Bacillus licheniformis (strain ATCC 14580 / DSM 13 / JCM 2505 / CCUG 7422 / NBRC 12200 / NCIMB 9375 / NCTC 10341 / NRRL NRS-1264 / Gibson 46) protein is Transcription elongation factor GreA.